Consider the following 283-residue polypeptide: MTDTFSDYADCTPLLDDREALDRFYDEHGYVYLRGVLDRELVRTTAEQMLQGLIALGHAAPGTTLDTLTIESYEAVDEVAMHDHVRYDDLWNHPSTLKVWEKVFGEPVFVFKSTTIRYYPSAPDSAEPSFLTPLHQDGFYIGPNKDFRTAWIPLLPTTRGTGGVAIADGSHKKGPREHVLTENFRRFGHAVRGIPPAEFGADEELLFSPMEPGDVLLFHAFMCHKSLPNVSVDPAGMRMSMDTRIQPASSHRGFNALTPWPESAKDASKGIMSKITGTPTTAE.

R117 provides a ligand contact to substrate. 2 residues coordinate Fe cation: H135 and D137. Residues 135–137 and W151 each bind 2-oxoglutarate; that span reads HQD. R186 contacts substrate. A Fe cation-binding site is contributed by H224. Residues S226 and R238 each contribute to the 2-oxoglutarate site. Residues 251–283 are disordered; that stretch reads HRGFNALTPWPESAKDASKGIMSKITGTPTTAE.

The protein belongs to the PhyH family. Fe cation is required as a cofactor. L-ascorbate serves as cofactor.

It catalyses the reaction 1-deoxypentalenate + 2-oxoglutarate + O2 = 1-deoxy-11beta-hydroxypentalenate + succinate + CO2. It participates in antibiotic biosynthesis; pentalenolactone biosynthesis. Its function is as follows. Catalyzes the conversion of 1-deoxypentalenic acid to 11-beta-hydroxy-1-deoxypentalenic acid in the biosynthesis of pentalenolactone antibiotic. This is 1-deoxypentalenic acid 11-beta-hydroxylase (pntH) from Streptomyces arenae.